The primary structure comprises 825 residues: AP-3 complex subunit delta (825 aa).

HEAT repeat units follow at residues 131–168, 169–205, 207–243, 244–281, 285–323, 324–360, 363–400, 469–513, 515–547, and 548–584; these read GLARDLYRDVLILLNHSVPYVRKRTILLLYRLCLQYPE, AISACIPKLRERLDDPDTSVVNAAVSVICELARRAPK, YLEFAPDLFHLLTTSSNNWMLIKLIKLFASLTPYEPR, LVKKLIPSLTDIIENTHAMSLLYECINTIVSGNMLVGH, DKLASLCASKLRGFFEDTDQNLKYIALLCLRKLANTHPS, LVSAQLDIILKCLVDTDTSIRLRALDLVNEIVNKENI, IVKTLMLQLIVSSDESAVEDIRNSTATRIIEMTSKSTY, EKRT…LAHR, LLQAITKIFCQWCLEEEPTWGVEKFGLVKLWVE, and KIVSFIEQFLNFQDMEIQRRASEFYILFNQVSDIVNT. The tract at residues 787 to 825 is disordered; that stretch reads STNQGSMGDIVLETKSPIRVEKKKSKKKKKKKEKTSGKE. Residues 807 to 819 are compositionally biased toward basic residues; that stretch reads EKKKSKKKKKKKE.

It belongs to the adaptor complexes large subunit family. In terms of assembly, adaptor protein complex 3 (AP-3) is a heterotetramer composed of 2 large adaptins (apl5 and apl6), a medium adaptin (apm3) and a small adaptin (aps3).

It is found in the golgi apparatus. Its subcellular location is the cytoplasmic vesicle. The protein localises to the clathrin-coated vesicle membrane. In terms of biological role, part of the AP-3 complex, an adaptor-related complex which is not clathrin-associated. The complex is associated with the Golgi region as well as more peripheral structures. It facilitates the budding of vesicles from the Golgi membrane and may be directly involved in trafficking to the vacuole. The polypeptide is AP-3 complex subunit delta (apl5) (Schizosaccharomyces pombe (strain 972 / ATCC 24843) (Fission yeast)).